The chain runs to 156 residues: Aspartate carbamoyltransferase regulatory chain (156 aa).

4 residues coordinate Zn(2+): Cys110, Cys115, Cys140, and Cys143.

Belongs to the PyrI family. Contains catalytic and regulatory chains. Zn(2+) serves as cofactor.

Its function is as follows. Involved in allosteric regulation of aspartate carbamoyltransferase. The sequence is that of Aspartate carbamoyltransferase regulatory chain from Methanocella arvoryzae (strain DSM 22066 / NBRC 105507 / MRE50).